Consider the following 560-residue polypeptide: uncharacterized protein (560 aa).

Positions 18–44 (CLRCRRRKVKCDRQYPCSRCKESEESC) form a DNA-binding region, zn(2)-C6 fungal-type. The tract at residues 60-80 (LSRPITRETDSSAHQETRTRL) is disordered. Basic and acidic residues predominate over residues 64–80 (ITRETDSSAHQETRTRL). Residues 182 to 202 (FATSIILIVTAIAVALSLESF) form a helical membrane-spanning segment.

It is found in the nucleus membrane. This is an uncharacterized protein from Schizosaccharomyces pombe (strain 972 / ATCC 24843) (Fission yeast).